A 96-amino-acid polypeptide reads, in one-letter code: Small ribosomal subunit protein bS6 (96 aa).

The protein belongs to the bacterial ribosomal protein bS6 family.

In terms of biological role, binds together with bS18 to 16S ribosomal RNA. The chain is Small ribosomal subunit protein bS6 from Thermobifida fusca (strain YX).